The chain runs to 185 residues: Small ribosomal subunit protein uS4 (185 aa).

An S4 RNA-binding domain is found at 107-179 (RRLQTLVYRK…NGRRKRKNNH (73 aa)). The disordered stretch occupies residues 161-185 (NTPLTNPEINGRRKRKNNHAGKEDN).

The protein belongs to the universal ribosomal protein uS4 family.

This is Small ribosomal subunit protein uS4 from Entamoeba histolytica (strain ATCC 30459 / HM-1:IMSS / ABRM).